The sequence spans 221 residues: Small ribosomal subunit protein uS3 (221 aa).

In terms of domain architecture, KH type-2 spans Ile39–Lys108.

The protein belongs to the universal ribosomal protein uS3 family. In terms of assembly, part of the 30S ribosomal subunit. Forms a tight complex with proteins S10 and S14.

Binds the lower part of the 30S subunit head. Binds mRNA in the 70S ribosome, positioning it for translation. This is Small ribosomal subunit protein uS3 from Clostridium novyi (strain NT).